A 476-amino-acid chain; its full sequence is Lipase (476 aa).

The signal sequence occupies residues M1 to A23. The active-site Charge relay system is the S207. Hemolysin-type calcium-binding repeat units follow at residues I372–I389, E390–F407, and S410–L427. Ca(2+)-binding residues include D437, D440, and D448.

Belongs to the AB hydrolase superfamily. Lipase family.

The catalysed reaction is a triacylglycerol + H2O = a diacylglycerol + a fatty acid + H(+). This chain is Lipase, found in Pseudomonas fluorescens.